Here is a 335-residue protein sequence, read N- to C-terminus: 2-acylglycerol O-acyltransferase 2-A (335 aa).

2 consecutive transmembrane segments (helical) span residues 24–44 and 47–67; these read WVFS…VLLF and FWII…TPSK.

It belongs to the diacylglycerol acyltransferase family.

The protein resides in the endoplasmic reticulum membrane. The protein localises to the cytoplasm. Its subcellular location is the perinuclear region. It carries out the reaction a 2-acylglycerol + an acyl-CoA = a 1,2-diacylglycerol + CoA. The catalysed reaction is a 2-acylglycerol + an acyl-CoA = a 1,2-diacyl-sn-glycerol + CoA. It catalyses the reaction a 2-acylglycerol + an acyl-CoA = a 2,3-diacyl-sn-glycerol + CoA. The enzyme catalyses a 1-acylglycerol + an acyl-CoA = a 1,2-diacylglycerol + CoA. It carries out the reaction a 1-acylglycerol + an acyl-CoA = a 1,3-diacylglycerol + CoA. The catalysed reaction is 1-O-alkylglycerol + an acyl-CoA = 1-O-alkyl-3-acylglycerol + CoA. It catalyses the reaction an acyl-CoA + a 1,2-diacyl-sn-glycerol = a triacyl-sn-glycerol + CoA. The protein operates within glycerolipid metabolism; triacylglycerol biosynthesis. Catalyzes the formation of diacylglycerol from 2-monoacylglycerol and fatty acyl-CoA. In terms of biological role, involved in glycerolipid synthesis and lipid metabolism. Catalyzes the formation of diacylglycerol, the precursor of triacylglycerol, by transferring the acyl chain of a fatty acyl-CoA to a monoacylglycerol. Plays a central role in absorption of dietary fat in the small intestine by catalyzing the resynthesis of triacylglycerol in enterocytes. Has a preference toward monoacylglycerols containing unsaturated fatty acids in an order of C18:3 &gt; C18:2 &gt; C18:1 &gt; C18:0 at sn-2. Able to use 1-monoalkylglycerol (1-MAkG, 1-O-alkylglycerol) as an acyl acceptor for the synthesis of monoalkyl-monoacylglycerol (MAMAG, 1-O-alkyl-3-acylglycerol or 1-O-alkyl-2-acylglycerol) and subsequently, with lower efficiency, may add another acyl chain producing monoalkyl-diacylglycerol (MADAG, 1-O-alkyl-2,3-diacylglycerol). Possesses weak but significant activity with diacylglycerol as substrate, producing triacylglycerol (triacyl-sn-glycerol). This chain is 2-acylglycerol O-acyltransferase 2-A (mogat2-a), found in Xenopus laevis (African clawed frog).